A 304-amino-acid chain; its full sequence is Dihydroorotate dehydrogenase B (NAD(+)), catalytic subunit (304 aa).

FMN is bound by residues Ser21 and 45–46; that span reads KA. Residues Lys45 and 69–73 contribute to the substrate site; that span reads NAIGL. The FMN site is built by Asn99 and Asn127. Asn127 serves as a coordination point for substrate. The active-site Nucleophile is the Cys130. Positions 165 and 191 each coordinate FMN. 192–193 is a substrate binding site; that stretch reads NT. FMN contacts are provided by residues Gly217, 243–244, and 265–266; these read GG and GT.

This sequence belongs to the dihydroorotate dehydrogenase family. Type 1 subfamily. In terms of assembly, heterotetramer of 2 PyrK and 2 PyrD type B subunits. FMN is required as a cofactor.

The protein localises to the cytoplasm. It carries out the reaction (S)-dihydroorotate + NAD(+) = orotate + NADH + H(+). The protein operates within pyrimidine metabolism; UMP biosynthesis via de novo pathway; orotate from (S)-dihydroorotate (NAD(+) route): step 1/1. Catalyzes the conversion of dihydroorotate to orotate with NAD(+) as electron acceptor. The sequence is that of Dihydroorotate dehydrogenase B (NAD(+)), catalytic subunit (pyrD) from Listeria monocytogenes serotype 4b (strain CLIP80459).